Consider the following 151-residue polypeptide: UPF0178 protein RD1_0321 (151 aa).

The protein belongs to the UPF0178 family.

This chain is UPF0178 protein RD1_0321, found in Roseobacter denitrificans (strain ATCC 33942 / OCh 114) (Erythrobacter sp. (strain OCh 114)).